Reading from the N-terminus, the 356-residue chain is UDP-N-acetylglucosamine--N-acetylmuramyl-(pentapeptide) pyrophosphoryl-undecaprenol N-acetylglucosamine transferase (356 aa).

Residues 10–12 (TAG), Asn123, Arg159, Ser193, Ile240, and Gln284 contribute to the UDP-N-acetyl-alpha-D-glucosamine site.

This sequence belongs to the glycosyltransferase 28 family. MurG subfamily.

The protein resides in the cell membrane. It carries out the reaction di-trans,octa-cis-undecaprenyl diphospho-N-acetyl-alpha-D-muramoyl-L-alanyl-D-glutamyl-meso-2,6-diaminopimeloyl-D-alanyl-D-alanine + UDP-N-acetyl-alpha-D-glucosamine = di-trans,octa-cis-undecaprenyl diphospho-[N-acetyl-alpha-D-glucosaminyl-(1-&gt;4)]-N-acetyl-alpha-D-muramoyl-L-alanyl-D-glutamyl-meso-2,6-diaminopimeloyl-D-alanyl-D-alanine + UDP + H(+). The protein operates within cell wall biogenesis; peptidoglycan biosynthesis. Functionally, cell wall formation. Catalyzes the transfer of a GlcNAc subunit on undecaprenyl-pyrophosphoryl-MurNAc-pentapeptide (lipid intermediate I) to form undecaprenyl-pyrophosphoryl-MurNAc-(pentapeptide)GlcNAc (lipid intermediate II). The polypeptide is UDP-N-acetylglucosamine--N-acetylmuramyl-(pentapeptide) pyrophosphoryl-undecaprenol N-acetylglucosamine transferase (Corynebacterium glutamicum (strain ATCC 13032 / DSM 20300 / JCM 1318 / BCRC 11384 / CCUG 27702 / LMG 3730 / NBRC 12168 / NCIMB 10025 / NRRL B-2784 / 534)).